The sequence spans 564 residues: Sulfite reductase [NADPH] hemoprotein beta-component 2 (564 aa).

[4Fe-4S] cluster is bound by residues C426, C432, C471, and C475. C475 contributes to the siroheme binding site.

It belongs to the nitrite and sulfite reductase 4Fe-4S domain family. Alpha(8)-beta(8). The alpha component is a flavoprotein, the beta component is a hemoprotein. The cofactor is siroheme. Requires [4Fe-4S] cluster as cofactor.

It carries out the reaction hydrogen sulfide + 3 NADP(+) + 3 H2O = sulfite + 3 NADPH + 4 H(+). The protein operates within sulfur metabolism; hydrogen sulfide biosynthesis; hydrogen sulfide from sulfite (NADPH route): step 1/1. Functionally, component of the sulfite reductase complex that catalyzes the 6-electron reduction of sulfite to sulfide. This is one of several activities required for the biosynthesis of L-cysteine from sulfate. This is Sulfite reductase [NADPH] hemoprotein beta-component 2 from Klebsiella pneumoniae (strain 342).